Here is a 122-residue protein sequence, read N- to C-terminus: Holo-[acyl-carrier-protein] synthase (122 aa).

2 residues coordinate Mg(2+): Asp8 and Glu56.

It belongs to the P-Pant transferase superfamily. AcpS family. Mg(2+) is required as a cofactor.

The protein resides in the cytoplasm. It catalyses the reaction apo-[ACP] + CoA = holo-[ACP] + adenosine 3',5'-bisphosphate + H(+). In terms of biological role, transfers the 4'-phosphopantetheine moiety from coenzyme A to a Ser of acyl-carrier-protein. The sequence is that of Holo-[acyl-carrier-protein] synthase from Alkaliphilus metalliredigens (strain QYMF).